The chain runs to 315 residues: MTEAWRPDGDEPRGVSGPFRVRVPAKINLHLGVGPLRPDGYHELNTVYHAISIHDELTARRGDTLALTMEGEGAGELALDDSNLVIRAARALAAHAGVPPYARLHLRKQIPLAGGLAGGSADAAAALVACDALWGTGLSRDELAGIAADLGSDVPFLIHGGTALGTGRGEAVSPVLARPTVWHWVVAVADGGLSTPVAYRELDRLRDAGAASTPLGSSDALLAALRQRDPRVLAGVLGNDLQDAALALRPSLAATLKAGEAAGALAGIVSGSGPTCVFLAANAADAERVAGELSALDVCRQARTARGPVAGARVG.

The active site involves lysine 26. An ATP-binding site is contributed by 111-121; it reads PLAGGLAGGSA. Aspartate 153 is an active-site residue.

This sequence belongs to the GHMP kinase family. IspE subfamily.

It carries out the reaction 4-CDP-2-C-methyl-D-erythritol + ATP = 4-CDP-2-C-methyl-D-erythritol 2-phosphate + ADP + H(+). The protein operates within isoprenoid biosynthesis; isopentenyl diphosphate biosynthesis via DXP pathway; isopentenyl diphosphate from 1-deoxy-D-xylulose 5-phosphate: step 3/6. Functionally, catalyzes the phosphorylation of the position 2 hydroxy group of 4-diphosphocytidyl-2C-methyl-D-erythritol. The protein is 4-diphosphocytidyl-2-C-methyl-D-erythritol kinase of Salinispora arenicola (strain CNS-205).